The following is a 445-amino-acid chain: Exodeoxyribonuclease 7 large subunit (445 aa).

It belongs to the XseA family. In terms of assembly, heterooligomer composed of large and small subunits.

The protein localises to the cytoplasm. It catalyses the reaction Exonucleolytic cleavage in either 5'- to 3'- or 3'- to 5'-direction to yield nucleoside 5'-phosphates.. Bidirectionally degrades single-stranded DNA into large acid-insoluble oligonucleotides, which are then degraded further into small acid-soluble oligonucleotides. In Geotalea daltonii (strain DSM 22248 / JCM 15807 / FRC-32) (Geobacter daltonii), this protein is Exodeoxyribonuclease 7 large subunit.